The chain runs to 651 residues: Acetyl-coenzyme A synthetase (651 aa).

Residues 191 to 194 (RGGK), Thr311, and Asn335 contribute to the CoA site. Residues 387–389 (GEP), 411–416 (DTWWQT), Asp500, and Arg515 contribute to the ATP site. Ser523 is a binding site for CoA. Arg526 provides a ligand contact to ATP. Mg(2+) is bound by residues Val537, His539, and Val542. Arg584 is a binding site for CoA. Residue Lys609 is modified to N6-acetyllysine.

The protein belongs to the ATP-dependent AMP-binding enzyme family. The cofactor is Mg(2+). In terms of processing, acetylated. Deacetylation by the SIR2-homolog deacetylase activates the enzyme.

The enzyme catalyses acetate + ATP + CoA = acetyl-CoA + AMP + diphosphate. Functionally, catalyzes the conversion of acetate into acetyl-CoA (AcCoA), an essential intermediate at the junction of anabolic and catabolic pathways. AcsA undergoes a two-step reaction. In the first half reaction, AcsA combines acetate with ATP to form acetyl-adenylate (AcAMP) intermediate. In the second half reaction, it can then transfer the acetyl group from AcAMP to the sulfhydryl group of CoA, forming the product AcCoA. The protein is Acetyl-coenzyme A synthetase of Pseudomonas syringae pv. syringae (strain B728a).